A 717-amino-acid polypeptide reads, in one-letter code: Copine family protein 5 (717 aa).

One can recognise a C2 domain in the interval 193 to 318 (YLGGIIVSAE…KYGPGSDNVY (126 aa)). A VWFA domain is found at 377–567 (ELDQRRFDGE…LNKSRIAETA (191 aa)).

This sequence belongs to the copine family.

The sequence is that of Copine family protein 5 (cpna-5) from Caenorhabditis elegans.